The sequence spans 58 residues: UPF0339 protein MA_3316 (58 aa).

Belongs to the UPF0339 family.

This is UPF0339 protein MA_3316 from Methanosarcina acetivorans (strain ATCC 35395 / DSM 2834 / JCM 12185 / C2A).